The primary structure comprises 187 residues: UPF0301 protein Shewmr7_1270 (187 aa).

The protein belongs to the UPF0301 (AlgH) family.

In Shewanella sp. (strain MR-7), this protein is UPF0301 protein Shewmr7_1270.